A 123-amino-acid chain; its full sequence is Large ribosomal subunit protein uL14 (123 aa).

It belongs to the universal ribosomal protein uL14 family. In terms of assembly, part of the 50S ribosomal subunit. Forms a cluster with proteins L3 and L19. In the 70S ribosome, L14 and L19 interact and together make contacts with the 16S rRNA in bridges B5 and B8.

Functionally, binds to 23S rRNA. Forms part of two intersubunit bridges in the 70S ribosome. This chain is Large ribosomal subunit protein uL14, found in Pectobacterium atrosepticum (strain SCRI 1043 / ATCC BAA-672) (Erwinia carotovora subsp. atroseptica).